The sequence spans 303 residues: Caspase-7 (303 aa).

Residues 1–27 (MADDQNCAPELEKADPSGEDGVDAKPD) form a disordered region. Ala2 bears the N-acetylalanine mark. Residues 2–23 (ADDQNCAPELEKADPSGEDGVD) constitute a propeptide, N-terminally processed. A compositionally biased stretch (basic and acidic residues) spans 10–27 (ELEKADPSGEDGVDAKPD). Residue Ser30 is modified to Phosphoserine. The exosite stretch occupies residues 38 to 41 (KKKK). Positions 76-87 (KNFDKVTGMDVR) are loop L1. Residue His144 is part of the active site. Phosphothreonine is present on Thr173. Cys186 is a catalytic residue. The loop L2 stretch occupies residues 187–196 (RGTELDDGVQ). Residues 199-206 (SGPINETD) constitute a propeptide that is removed on maturation. The interval 226–238 (VPGYYSWRNPGKG) is loop L3. A Phosphoserine modification is found at Ser239. A loop L4 region spans residues 274-288 (ESQCDDPCFNEKKQI).

Belongs to the peptidase C14A family. Heterotetramer that consists of two anti-parallel arranged heterodimers, each one formed by a 20 kDa (p20) and a 11 kDa (p11) subunit. Interacts with XIAP (via its second BIR domain); inhibiting CASP7 activity. Interacts with BIRC6/bruce. Interacts with ATXN3 (short isoform 1). Interacts with HSPA5. In terms of processing, cleavage by different proteases, such as granzyme B (GZMB), caspase-1 (CASP1), caspase-8 (CASP8) or caspase-9 (CASP9) generate the two active subunits. Its involvement in different programmed cell death processes is probably specified by the protease that activates CASP7. Cleaved and activated by initiator caspases (CASP8 and/or CASP9), leading to execution phase of apoptosis. Cleavage and maturation by GZMB regulates granzyme-mediated programmed cell death. Cleaved and activated by CASP1 in response to bacterial infection. Propeptide domains can also be cleaved efficiently by CASP3. Active heterodimers between the small subunit of caspase-7 and the large subunit of CASP3, and vice versa, also occur. Also cleaved at the N-terminus at alternative sites by CAPN1, leading to its activation. Phosphorylation at Ser-30 and Ser-239 by PAK2 inhibits its activity. Phosphorylation at Ser-30 prevents cleavage and activation by initiator caspase CASP9, while phosphorylation at Ser-239 prevents thiol protease activity by preventing substrate-binding. Post-translationally, ubiquitinated by BIRC6; this activity is inhibited by DIABLO/SMAC.

It is found in the cytoplasm. The protein localises to the cytosol. Its subcellular location is the nucleus. The protein resides in the secreted. It localises to the extracellular space. The catalysed reaction is Strict requirement for an Asp residue at position P1 and has a preferred cleavage sequence of Asp-Glu-Val-Asp-|-.. Its activity is regulated as follows. During activation, the N-terminal disordered prodomain is removed by cleavage. Concomitantly, double cleavage gives rise to a large Caspase-7 subunit p20 and a small Caspase-7 subunit p11. The two large and two small subunits then assemble to form the active CASP7 complex. Can be cleaved and activated by different caspases, depending on the context. Cleaved and activated by initiator caspases (CASP8 and/or CASP9), leading to execution phase of apoptosis. Cleavage and maturation by GZMB regulates granzyme-mediated programmed cell death. Cleavage and maturation by CASP1 regulates pyroptosis. Inhibited by XIAP, which directly binds to the active site pocket and obstructs substrate entry. Phosphorylation at Ser-30 and Ser-239 by PAK2 inhibits its activity. Inhibited by BIRC6; following inhibition of BIRC6-caspase binding by DIABLO/SMAC, BIRC6 is subjected to caspase cleavage, leading to an increase in active caspases. Its function is as follows. Thiol protease involved in different programmed cell death processes, such as apoptosis, pyroptosis or granzyme-mediated programmed cell death, by proteolytically cleaving target proteins. Has a marked preference for Asp-Glu-Val-Asp (DEVD) consensus sequences, with some plasticity for alternate non-canonical sequences. Its involvement in the different programmed cell death processes is probably determined by upstream proteases that activate CASP7. Acts as an effector caspase involved in the execution phase of apoptosis: following cleavage and activation by initiator caspases (CASP8 and/or CASP9), mediates execution of apoptosis by catalyzing cleavage of proteins, such as CLSPN, PARP1, PTGES3 and YY1. Compared to CASP3, acts as a minor executioner caspase and cleaves a limited set of target proteins. Acts as a key regulator of the inflammatory response in response to bacterial infection by catalyzing cleavage and activation of the sphingomyelin phosphodiesterase SMPD1 in the extracellular milieu, thereby promoting membrane repair. Regulates pyroptosis in intestinal epithelial cells: cleaved and activated by CASP1 in response to S.typhimurium infection, promoting its secretion to the extracellular milieu, where it catalyzes activation of SMPD1, generating ceramides that repair membranes and counteract the action of gasdermin-D (GSDMD) pores. Regulates granzyme-mediated programmed cell death in hepatocytes: cleaved and activated by granzyme B (GZMB) in response to bacterial infection, promoting its secretion to the extracellular milieu, where it catalyzes activation of SMPD1, generating ceramides that repair membranes and counteract the action of perforin (PRF1) pores. Following cleavage by CASP1 in response to inflammasome activation, catalyzes processing and inactivation of PARP1, alleviating the transcription repressor activity of PARP1. Acts as an inhibitor of type I interferon production during virus-induced apoptosis by mediating cleavage of antiviral proteins CGAS, IRF3 and MAVS, thereby preventing cytokine overproduction. Cleaves and activates sterol regulatory element binding proteins (SREBPs). Cleaves phospholipid scramblase proteins XKR4, XKR8 and XKR9. Cleaves BIRC6 following inhibition of BIRC6-caspase binding by DIABLO/SMAC. The protein is Caspase-7 (CASP7) of Mesocricetus auratus (Golden hamster).